We begin with the raw amino-acid sequence, 630 residues long: ATP synthase subunit alpha (630 aa).

Position 173–180 (173–180 (GDRQTGKT)) interacts with ATP. The disordered stretch occupies residues 592-630 (AGGASTAADEDGAGDDEEEAPAPKAKSKNAKSASKAKEK). The span at 599 to 611 (ADEDGAGDDEEEA) shows a compositional bias: acidic residues.

It belongs to the ATPase alpha/beta chains family. F-type ATPases have 2 components, CF(1) - the catalytic core - and CF(0) - the membrane proton channel. CF(1) has five subunits: alpha(3), beta(3), gamma(1), delta(1), epsilon(1). CF(0) has three main subunits: a(1), b(2) and c(9-12). The alpha and beta chains form an alternating ring which encloses part of the gamma chain. CF(1) is attached to CF(0) by a central stalk formed by the gamma and epsilon chains, while a peripheral stalk is formed by the delta and b chains.

Its subcellular location is the cell inner membrane. It carries out the reaction ATP + H2O + 4 H(+)(in) = ADP + phosphate + 5 H(+)(out). Its function is as follows. Produces ATP from ADP in the presence of a proton gradient across the membrane. The alpha chain is a regulatory subunit. The chain is ATP synthase subunit alpha from Sorangium cellulosum (strain So ce56) (Polyangium cellulosum (strain So ce56)).